Reading from the N-terminus, the 761-residue chain is Wall-associated receptor kinase-like 4 (761 aa).

Positions 1-26 (MKKETQNLQCIPLVISVLSLFGVSSA) are cleaved as a signal peptide. Topologically, residues 27–349 (RKPPYLCNRV…EPKKPGQIKP (323 aa)) are extracellular. Asn64, Asn166, Asn206, Asn226, and Asn262 each carry an N-linked (GlcNAc...) asparagine glycan. The segment at 278–339 (CVCSYGYFSG…CVNKPGWFTC (62 aa)) is atypical EGF-like. 3 disulfide bridges follow: Cys280–Cys293, Cys316–Cys330, and Cys325–Cys339. Residues 350–370 (VFQGVLIGSALLLFAFGIFGL) traverse the membrane as a helical segment. The Cytoplasmic portion of the chain corresponds to 371-761 (YKFIKKQRRS…VEPLVPLRTW (391 aa)). The 274-residue stretch at 424-697 (FNTNRVLGQG…REVSVELERI (274 aa)) folds into the Protein kinase domain. Residues 430-438 (LGQGGQGTV) and Lys452 each bind ATP. Phosphotyrosine is present on Tyr497. The active-site Proton acceptor is Asp549. A phosphothreonine mark is found at Thr583 and Thr588. Phosphotyrosine is present on Tyr596. Residues 701-761 (SYKSEIHNDD…VEPLVPLRTW (61 aa)) form a disordered region. Over residues 708 to 732 (NDDDDDDDDDDEDDQAMELNIEETW) the composition is skewed to acidic residues.

The protein belongs to the protein kinase superfamily. Ser/Thr protein kinase family. As to expression, expressed in the whole plant. Detected in root-shoot junctions and lateral root initiation sites.

The protein localises to the membrane. The catalysed reaction is L-seryl-[protein] + ATP = O-phospho-L-seryl-[protein] + ADP + H(+). It carries out the reaction L-threonyl-[protein] + ATP = O-phospho-L-threonyl-[protein] + ADP + H(+). Its function is as follows. Serine/threonine-protein kinase that may function as a signaling receptor of extracellular matrix component. Plays a role in plant mineral nutrients response. This Arabidopsis thaliana (Mouse-ear cress) protein is Wall-associated receptor kinase-like 4 (WAKL4).